A 206-amino-acid polypeptide reads, in one-letter code: 3-demethoxyubiquinol 3-hydroxylase (206 aa).

Residues glutamate 55, glutamate 85, histidine 88, glutamate 137, glutamate 169, and histidine 172 each contribute to the Fe cation site.

Belongs to the COQ7 family. The cofactor is Fe cation.

The protein resides in the cell membrane. The catalysed reaction is a 5-methoxy-2-methyl-3-(all-trans-polyprenyl)benzene-1,4-diol + AH2 + O2 = a 3-demethylubiquinol + A + H2O. It participates in cofactor biosynthesis; ubiquinone biosynthesis. Catalyzes the hydroxylation of 2-nonaprenyl-3-methyl-6-methoxy-1,4-benzoquinol during ubiquinone biosynthesis. The protein is 3-demethoxyubiquinol 3-hydroxylase of Aromatoleum aromaticum (strain DSM 19018 / LMG 30748 / EbN1) (Azoarcus sp. (strain EbN1)).